A 474-amino-acid polypeptide reads, in one-letter code: Aspartyl/glutamyl-tRNA(Asn/Gln) amidotransferase subunit B (474 aa).

The protein belongs to the GatB/GatE family. GatB subfamily. Heterotrimer of A, B and C subunits.

It carries out the reaction L-glutamyl-tRNA(Gln) + L-glutamine + ATP + H2O = L-glutaminyl-tRNA(Gln) + L-glutamate + ADP + phosphate + H(+). The catalysed reaction is L-aspartyl-tRNA(Asn) + L-glutamine + ATP + H2O = L-asparaginyl-tRNA(Asn) + L-glutamate + ADP + phosphate + 2 H(+). In terms of biological role, allows the formation of correctly charged Asn-tRNA(Asn) or Gln-tRNA(Gln) through the transamidation of misacylated Asp-tRNA(Asn) or Glu-tRNA(Gln) in organisms which lack either or both of asparaginyl-tRNA or glutaminyl-tRNA synthetases. The reaction takes place in the presence of glutamine and ATP through an activated phospho-Asp-tRNA(Asn) or phospho-Glu-tRNA(Gln). The chain is Aspartyl/glutamyl-tRNA(Asn/Gln) amidotransferase subunit B from Helicobacter hepaticus (strain ATCC 51449 / 3B1).